We begin with the raw amino-acid sequence, 628 residues long: 3-hydroxy-3-methylglutaryl-coenzyme A reductase 2 (628 aa).

2 helical membrane passes run 38–58 and 78–98; these read PLYL…YFLL and EIVA…FFGI. The segment at 99 to 212 is linker; it reads DFVQSLIIRP…HEKTVIVTTE (114 aa). N-linked (GlcNAc...) asparagine glycosylation is present at Asn153. The catalytic stretch occupies residues 213–628; the sequence is EDEEIIKSVV…SSKDMSNLSS (416 aa). Residue Glu307 is the Charge relay system of the active site. N-linked (GlcNAc...) asparagine glycosylation occurs at Asn371. The active-site Charge relay system is Lys439. Asn484 carries an N-linked (GlcNAc...) asparagine glycan. Asp515 functions as the Charge relay system in the catalytic mechanism. Catalysis depends on His613, which acts as the Proton donor. N-linked (GlcNAc...) asparagine glycosylation is found at Asn617 and Asn625.

The protein belongs to the HMG-CoA reductase family.

The protein localises to the endoplasmic reticulum membrane. The protein resides in the mitochondrion membrane. It localises to the plastid membrane. It carries out the reaction (R)-mevalonate + 2 NADP(+) + CoA = (3S)-3-hydroxy-3-methylglutaryl-CoA + 2 NADPH + 2 H(+). The protein operates within metabolic intermediate biosynthesis; (R)-mevalonate biosynthesis; (R)-mevalonate from acetyl-CoA: step 3/3. Catalyzes the synthesis of mevalonate. The specific precursor of all isoprenoid compounds present in plants. In Gossypium hirsutum (Upland cotton), this protein is 3-hydroxy-3-methylglutaryl-coenzyme A reductase 2 (HMG2).